The chain runs to 324 residues: Beta-ketoacyl-[acyl-carrier-protein] synthase III (324 aa).

Catalysis depends on residues Cys112 and His249. The ACP-binding stretch occupies residues 250-254 (QANRR). The active site involves Asn279.

Belongs to the thiolase-like superfamily. FabH family. Homodimer.

It is found in the cytoplasm. The catalysed reaction is malonyl-[ACP] + acetyl-CoA + H(+) = 3-oxobutanoyl-[ACP] + CO2 + CoA. It functions in the pathway lipid metabolism; fatty acid biosynthesis. Functionally, catalyzes the condensation reaction of fatty acid synthesis by the addition to an acyl acceptor of two carbons from malonyl-ACP. Catalyzes the first condensation reaction which initiates fatty acid synthesis and may therefore play a role in governing the total rate of fatty acid production. Possesses both acetoacetyl-ACP synthase and acetyl transacylase activities. Its substrate specificity determines the biosynthesis of branched-chain and/or straight-chain of fatty acids. This is Beta-ketoacyl-[acyl-carrier-protein] synthase III from Streptococcus equi subsp. zooepidemicus (strain MGCS10565).